Consider the following 293-residue polypeptide: 4-diphosphocytidyl-2-C-methyl-D-erythritol kinase (293 aa).

Residue Lys10 is part of the active site. Residue 96–106 (PIAAGLGGGSS) participates in ATP binding. Residue Asp138 is part of the active site.

This sequence belongs to the GHMP kinase family. IspE subfamily.

The catalysed reaction is 4-CDP-2-C-methyl-D-erythritol + ATP = 4-CDP-2-C-methyl-D-erythritol 2-phosphate + ADP + H(+). It functions in the pathway isoprenoid biosynthesis; isopentenyl diphosphate biosynthesis via DXP pathway; isopentenyl diphosphate from 1-deoxy-D-xylulose 5-phosphate: step 3/6. Its function is as follows. Catalyzes the phosphorylation of the position 2 hydroxy group of 4-diphosphocytidyl-2C-methyl-D-erythritol. The chain is 4-diphosphocytidyl-2-C-methyl-D-erythritol kinase from Caulobacter sp. (strain K31).